Consider the following 348-residue polypeptide: Mannonate dehydratase (348 aa).

This sequence belongs to the mannonate dehydratase family. Fe(2+) is required as a cofactor. It depends on Mn(2+) as a cofactor.

The catalysed reaction is D-mannonate = 2-dehydro-3-deoxy-D-gluconate + H2O. The protein operates within carbohydrate metabolism; pentose and glucuronate interconversion. Functionally, catalyzes the dehydration of D-mannonate. The chain is Mannonate dehydratase from Streptococcus agalactiae serotype V (strain ATCC BAA-611 / 2603 V/R).